Reading from the N-terminus, the 454-residue chain is Mitochondrial distribution and morphology protein 10 (454 aa).

The protein belongs to the MDM10 family. Component of the ER-mitochondria encounter structure (ERMES) or MDM complex, composed of MMM1, MDM10, MDM12 and MDM34. Associates with the mitochondrial outer membrane sorting assembly machinery SAM(core) complex.

It localises to the mitochondrion outer membrane. In terms of biological role, component of the ERMES/MDM complex, which serves as a molecular tether to connect the endoplasmic reticulum and mitochondria. Components of this complex are involved in the control of mitochondrial shape and protein biogenesis and may function in phospholipid exchange. MDM10 is involved in the late assembly steps of the general translocase of the mitochondrial outer membrane (TOM complex). Functions in the TOM40-specific route of the assembly of outer membrane beta-barrel proteins, including the association of TOM40 with the receptor TOM22 and small TOM proteins. Can associate with the SAM(core) complex as well as the MDM12-MMM1 complex, both involved in late steps of the major beta-barrel assembly pathway, that is responsible for biogenesis of all outer membrane beta-barrel proteins. May act as a switch that shuttles between both complexes and channels precursor proteins into the TOM40-specific pathway. Plays a role in mitochondrial morphology and in the inheritance of mitochondria. This is Mitochondrial distribution and morphology protein 10 from Candida tropicalis (strain ATCC MYA-3404 / T1) (Yeast).